Consider the following 155-residue polypeptide: Large ribosomal subunit protein uL22 (155 aa).

This sequence belongs to the universal ribosomal protein uL22 family. As to quaternary structure, part of the 50S ribosomal subunit.

Functionally, this protein binds specifically to 23S rRNA. It makes multiple contacts with different domains of the 23S rRNA in the assembled 50S subunit and ribosome. Its function is as follows. The globular domain of the protein is located near the polypeptide exit tunnel on the outside of the subunit, while an extended beta-hairpin is found that lines the wall of the exit tunnel in the center of the 70S ribosome. This chain is Large ribosomal subunit protein uL22, found in Archaeoglobus fulgidus (strain ATCC 49558 / DSM 4304 / JCM 9628 / NBRC 100126 / VC-16).